We begin with the raw amino-acid sequence, 407 residues long: tRNA(Ile)-lysidine synthase (407 aa).

Residue S36–S41 participates in ATP binding.

This sequence belongs to the tRNA(Ile)-lysidine synthase family.

It is found in the cytoplasm. The catalysed reaction is cytidine(34) in tRNA(Ile2) + L-lysine + ATP = lysidine(34) in tRNA(Ile2) + AMP + diphosphate + H(+). Its function is as follows. Ligates lysine onto the cytidine present at position 34 of the AUA codon-specific tRNA(Ile) that contains the anticodon CAU, in an ATP-dependent manner. Cytidine is converted to lysidine, thus changing the amino acid specificity of the tRNA from methionine to isoleucine. This chain is tRNA(Ile)-lysidine synthase, found in Tropheryma whipplei (strain TW08/27) (Whipple's bacillus).